The following is an 89-amino-acid chain: Small ribosomal subunit protein uS15 (89 aa).

Belongs to the universal ribosomal protein uS15 family. Part of the 30S ribosomal subunit. Forms a bridge to the 50S subunit in the 70S ribosome, contacting the 23S rRNA.

One of the primary rRNA binding proteins, it binds directly to 16S rRNA where it helps nucleate assembly of the platform of the 30S subunit by binding and bridging several RNA helices of the 16S rRNA. Functionally, forms an intersubunit bridge (bridge B4) with the 23S rRNA of the 50S subunit in the ribosome. The protein is Small ribosomal subunit protein uS15 of Prochlorococcus marinus (strain MIT 9515).